The chain runs to 453 residues: Bifunctional protein GlmU (453 aa).

A pyrophosphorylase region spans residues 1–225 (MNIVILAAGT…EWETLGVNSK (225 aa)). Residues 6 to 9 (LAAG), Lys20, Gln71, 76 to 77 (GT), 98 to 100 (YGD), Gly135, Glu150, Asn165, and Asn223 each bind UDP-N-acetyl-alpha-D-glucosamine. Residue Asp100 coordinates Mg(2+). Asn223 is a Mg(2+) binding site. Positions 226–246 (AQLAELERIHQRNVADALLVD) are linker. The tract at residues 247 to 453 (GVTLADPARV…GYVRPVKKKS (207 aa)) is N-acetyltransferase. Residues Arg329 and Lys347 each contribute to the UDP-N-acetyl-alpha-D-glucosamine site. The active-site Proton acceptor is the His359. UDP-N-acetyl-alpha-D-glucosamine is bound by residues Tyr362 and Asn373. Residues Ala376, 382–383 (NY), Ser401, and Ala419 each bind acetyl-CoA.

In the N-terminal section; belongs to the N-acetylglucosamine-1-phosphate uridyltransferase family. It in the C-terminal section; belongs to the transferase hexapeptide repeat family. As to quaternary structure, homotrimer. It depends on Mg(2+) as a cofactor.

The protein localises to the cytoplasm. It carries out the reaction alpha-D-glucosamine 1-phosphate + acetyl-CoA = N-acetyl-alpha-D-glucosamine 1-phosphate + CoA + H(+). It catalyses the reaction N-acetyl-alpha-D-glucosamine 1-phosphate + UTP + H(+) = UDP-N-acetyl-alpha-D-glucosamine + diphosphate. It participates in nucleotide-sugar biosynthesis; UDP-N-acetyl-alpha-D-glucosamine biosynthesis; N-acetyl-alpha-D-glucosamine 1-phosphate from alpha-D-glucosamine 6-phosphate (route II): step 2/2. The protein operates within nucleotide-sugar biosynthesis; UDP-N-acetyl-alpha-D-glucosamine biosynthesis; UDP-N-acetyl-alpha-D-glucosamine from N-acetyl-alpha-D-glucosamine 1-phosphate: step 1/1. It functions in the pathway bacterial outer membrane biogenesis; LPS lipid A biosynthesis. In terms of biological role, catalyzes the last two sequential reactions in the de novo biosynthetic pathway for UDP-N-acetylglucosamine (UDP-GlcNAc). The C-terminal domain catalyzes the transfer of acetyl group from acetyl coenzyme A to glucosamine-1-phosphate (GlcN-1-P) to produce N-acetylglucosamine-1-phosphate (GlcNAc-1-P), which is converted into UDP-GlcNAc by the transfer of uridine 5-monophosphate (from uridine 5-triphosphate), a reaction catalyzed by the N-terminal domain. The protein is Bifunctional protein GlmU of Burkholderia orbicola (strain MC0-3).